A 184-amino-acid polypeptide reads, in one-letter code: Lactoylglutathione lyase (184 aa).

Alanine 2 is subject to N-acetylalanine. The cysteines at positions 19 and 20 are disulfide-linked. Residues 31–177 form the VOC domain; that stretch reads LLQQTMLRIK…DGYWIEILNP (147 aa). Substrate contacts are provided by glutamine 34 and arginine 38. Glutamine 34 is a binding site for Zn(2+). The residue at position 88 (lysine 88) is an N6-succinyllysine. Residue glutamate 100 coordinates Zn(2+). A substrate-binding site is contributed by asparagine 104. Residue threonine 107 is modified to Phosphothreonine. Substrate is bound by residues arginine 123 and histidine 127. Histidine 127 is a Zn(2+) binding site. The residue at position 139 (cysteine 139) is an S-glutathionyl cysteine. The residue at position 148 (lysine 148) is an N6-acetyllysine; alternate. N6-succinyllysine; alternate is present on lysine 148. 157–158 is a binding site for substrate; sequence KM. Glutamate 173 lines the Zn(2+) pocket. The active-site Proton donor/acceptor is glutamate 173.

The protein belongs to the glyoxalase I family. As to quaternary structure, homodimer. Zn(2+) is required as a cofactor. In terms of processing, glutathionylation at Cys-139 inhibits enzyme activity. Phosphorylated at Thr-107 in the presence of CaMK2. However, this is a consensus site for phosphorylation by CK2 so phosphorylation may be mediated by CK2 rather than CaMK2. Phosphorylation is induced by TNF and suppresses the TNF-induced transcriptional activity of NF-kappa-B. Post-translationally, exists in a nitric oxide (NO)-modified form. The exact nature of the modification is unknown, but it suppresses the TNF-induced transcriptional activity of NF-kappa-B.

It catalyses the reaction (R)-S-lactoylglutathione = methylglyoxal + glutathione. It functions in the pathway secondary metabolite metabolism; methylglyoxal degradation; (R)-lactate from methylglyoxal: step 1/2. With respect to regulation, subject to competitive inhibition by methyl-gerfelin. Functionally, catalyzes the conversion of hemimercaptal, formed from methylglyoxal and glutathione, to S-lactoylglutathione. Involved in the regulation of TNF-induced transcriptional activity of NF-kappa-B. Required for normal osteoclastogenesis. The chain is Lactoylglutathione lyase (Glo1) from Mus musculus (Mouse).